Consider the following 123-residue polypeptide: Mediator of RNA polymerase II transcription subunit 9 (123 aa).

Positions 95 to 123 form a coiled coil; sequence WQLHIQEKKIELEKKTKHLQRLRESIQKQ.

It belongs to the Mediator complex subunit 9 family. Component of the Mediator complex.

The protein resides in the nucleus. In terms of biological role, component of the Mediator complex, a coactivator involved in the regulated transcription of nearly all RNA polymerase II-dependent genes. Mediator functions as a bridge to convey information from gene-specific regulatory proteins to the basal RNA polymerase II transcription machinery. Mediator is recruited to promoters by direct interactions with regulatory proteins and serves as a scaffold for the assembly of a functional preinitiation complex with RNA polymerase II and the general transcription factors. The protein is Mediator of RNA polymerase II transcription subunit 9 (CSE2) of Kluyveromyces lactis (strain ATCC 8585 / CBS 2359 / DSM 70799 / NBRC 1267 / NRRL Y-1140 / WM37) (Yeast).